Consider the following 308-residue polypeptide: Acetyl-coenzyme A carboxylase carboxyl transferase subunit alpha (308 aa).

Residues 36–286 (ELEKEVSSVY…ESYFLKAFEE (251 aa)) enclose the CoA carboxyltransferase C-terminal domain.

This sequence belongs to the AccA family. As to quaternary structure, acetyl-CoA carboxylase is a heterohexamer composed of biotin carboxyl carrier protein (AccB), biotin carboxylase (AccC) and two subunits each of ACCase subunit alpha (AccA) and ACCase subunit beta (AccD).

Its subcellular location is the cytoplasm. The catalysed reaction is N(6)-carboxybiotinyl-L-lysyl-[protein] + acetyl-CoA = N(6)-biotinyl-L-lysyl-[protein] + malonyl-CoA. The protein operates within lipid metabolism; malonyl-CoA biosynthesis; malonyl-CoA from acetyl-CoA: step 1/1. Component of the acetyl coenzyme A carboxylase (ACC) complex. First, biotin carboxylase catalyzes the carboxylation of biotin on its carrier protein (BCCP) and then the CO(2) group is transferred by the carboxyltransferase to acetyl-CoA to form malonyl-CoA. The polypeptide is Acetyl-coenzyme A carboxylase carboxyl transferase subunit alpha (Helicobacter hepaticus (strain ATCC 51449 / 3B1)).